The primary structure comprises 331 residues: MTPTLTPPLQWQRRHVLSLQDFTVAELDIVLQTALSFQEVLNRRTKKVPTLQARVVANLFFESSTRTRNSFELAAKRLSADILNFSPGTSALNKGETILDTAKTLWAMGAEFMVIRHRQSGVPHTIAAEMDRLGGQVAVLNAGDGLHEHPSQALLDLFTLCQLYDPRQPRCALLQGKKIVIVGDIRHSRVARSNLYSLKTAGADVHLAGPPTLLPPEFADYGATLHWTLEPALADADIVMTLRLQRERMDQYLIPSLREYHQHFGMTHERLRLCRPDVRVLHPGPVNRGVELSSALLDDPQFSLVNQQVSSGVAVRMALLYLMGTYHGVKP.

Residues Arg-66 and Thr-67 each contribute to the carbamoyl phosphate site. Lys-94 is an L-aspartate binding site. 3 residues coordinate carbamoyl phosphate: Arg-116, His-149, and Gln-152. 2 residues coordinate L-aspartate: Arg-189 and Arg-243. Carbamoyl phosphate-binding residues include Gly-284 and Pro-285.

The protein belongs to the aspartate/ornithine carbamoyltransferase superfamily. ATCase family. As to quaternary structure, heterododecamer (2C3:3R2) of six catalytic PyrB chains organized as two trimers (C3), and six regulatory PyrI chains organized as three dimers (R2).

The catalysed reaction is carbamoyl phosphate + L-aspartate = N-carbamoyl-L-aspartate + phosphate + H(+). Its pathway is pyrimidine metabolism; UMP biosynthesis via de novo pathway; (S)-dihydroorotate from bicarbonate: step 2/3. In terms of biological role, catalyzes the condensation of carbamoyl phosphate and aspartate to form carbamoyl aspartate and inorganic phosphate, the committed step in the de novo pyrimidine nucleotide biosynthesis pathway. The polypeptide is Aspartate carbamoyltransferase catalytic subunit (Thermosynechococcus vestitus (strain NIES-2133 / IAM M-273 / BP-1)).